The sequence spans 84 residues: Sec-independent protein translocase protein TatA (84 aa).

A helical transmembrane segment spans residues 1-21 (MPNLGVPELLIIALVIFLLFG). Basic and acidic residues predominate over residues 42 to 57 (EMDEMKTDGDKKELAE). A disordered region spans residues 42–84 (EMDEMKTDGDKKELAEKQAPTAEQQQAQDLAQPKSEQPNEHNA). Positions 62–77 (TAEQQQAQDLAQPKSE) are enriched in polar residues.

It belongs to the TatA/E family. The Tat system comprises two distinct complexes: a TatABC complex, containing multiple copies of TatA, TatB and TatC subunits, and a separate TatA complex, containing only TatA subunits. Substrates initially bind to the TatABC complex, which probably triggers association of the separate TatA complex to form the active translocon.

Its subcellular location is the cell membrane. Part of the twin-arginine translocation (Tat) system that transports large folded proteins containing a characteristic twin-arginine motif in their signal peptide across membranes. TatA could form the protein-conducting channel of the Tat system. In Corynebacterium jeikeium (strain K411), this protein is Sec-independent protein translocase protein TatA.